The sequence spans 296 residues: GTPase Era (296 aa).

One can recognise an Era-type G domain in the interval 3 to 170 (KSGFVTIVGR…KELMFKYIPE (168 aa)). Positions 11–18 (GRPNVGKS) are G1. 11-18 (GRPNVGKS) contacts GTP. The tract at residues 37-41 (QTTRN) is G2. The segment at 58–61 (DTPG) is G3. GTP contacts are provided by residues 58-62 (DTPGI) and 120-123 (NKID). The tract at residues 120-123 (NKID) is G4. Positions 149 to 151 (ISA) are G5. The KH type-2 domain maps to 201-278 (LSEEVPHGIA…YIRLWVKVKE (78 aa)).

The protein belongs to the TRAFAC class TrmE-Era-EngA-EngB-Septin-like GTPase superfamily. Era GTPase family. In terms of assembly, monomer.

It is found in the cytoplasm. Its subcellular location is the cell membrane. Functionally, an essential GTPase that binds both GDP and GTP, with rapid nucleotide exchange. Plays a role in 16S rRNA processing and 30S ribosomal subunit biogenesis and possibly also in cell cycle regulation and energy metabolism. This Clostridium botulinum (strain Langeland / NCTC 10281 / Type F) protein is GTPase Era.